The chain runs to 511 residues: Putative thymidine phosphorylase (511 aa).

The protein belongs to the thymidine/pyrimidine-nucleoside phosphorylase family. Type 2 subfamily.

It catalyses the reaction thymidine + phosphate = 2-deoxy-alpha-D-ribose 1-phosphate + thymine. The sequence is that of Putative thymidine phosphorylase from Polaromonas sp. (strain JS666 / ATCC BAA-500).